A 560-amino-acid chain; its full sequence is Dihydroxy-acid dehydratase (560 aa).

Cys-52 lines the [2Fe-2S] cluster pocket. Residue Asp-84 participates in Mg(2+) binding. [2Fe-2S] cluster is bound at residue Cys-125. Mg(2+)-binding residues include Asp-126 and Lys-127. The residue at position 127 (Lys-127) is an N6-carboxylysine. Cys-197 serves as a coordination point for [2Fe-2S] cluster. Glu-449 is a binding site for Mg(2+). Ser-475 (proton acceptor) is an active-site residue.

Belongs to the IlvD/Edd family. Homodimer. [2Fe-2S] cluster is required as a cofactor. Mg(2+) serves as cofactor.

The enzyme catalyses (2R)-2,3-dihydroxy-3-methylbutanoate = 3-methyl-2-oxobutanoate + H2O. The catalysed reaction is (2R,3R)-2,3-dihydroxy-3-methylpentanoate = (S)-3-methyl-2-oxopentanoate + H2O. It participates in amino-acid biosynthesis; L-isoleucine biosynthesis; L-isoleucine from 2-oxobutanoate: step 3/4. The protein operates within amino-acid biosynthesis; L-valine biosynthesis; L-valine from pyruvate: step 3/4. Functions in the biosynthesis of branched-chain amino acids. Catalyzes the dehydration of (2R,3R)-2,3-dihydroxy-3-methylpentanoate (2,3-dihydroxy-3-methylvalerate) into 2-oxo-3-methylpentanoate (2-oxo-3-methylvalerate) and of (2R)-2,3-dihydroxy-3-methylbutanoate (2,3-dihydroxyisovalerate) into 2-oxo-3-methylbutanoate (2-oxoisovalerate), the penultimate precursor to L-isoleucine and L-valine, respectively. The polypeptide is Dihydroxy-acid dehydratase (Sulfurisphaera tokodaii (strain DSM 16993 / JCM 10545 / NBRC 100140 / 7) (Sulfolobus tokodaii)).